The following is a 117-amino-acid chain: Ig heavy chain V region 1-72 (117 aa).

Residues 1–19 (MGWSCIMLFLAATATGVHS) form the signal peptide. The segment at 20–49 (QVQLQQPGAELVKPGASVKLSCKASGYTFT) is framework-1. A disulfide bond links C41 and C115. The interval 50 to 54 (SYWMH) is complementarity-determining-1. The segment at 55-68 (WVKQRPGRGLEWIG) is framework-2. The tract at residues 69-85 (RIDPNSGGTKYNEKFKS) is complementarity-determining-2. A framework-3 region spans residues 86–117 (KATLTVDKPSSTAYMQLSSLTSEDSAVYYCAR).

In Mus musculus (Mouse), this protein is Ig heavy chain V region 1-72.